The sequence spans 159 residues: Succinate dehydrogenase [ubiquinone] cytochrome b small subunit, mitochondrial (159 aa).

The N-terminal 56 residues, 1–56 (MAVLLKLGVLCSGQGARALLLRSRVVRPAYVSAFLQDQPTQGRCGTQHIHLSPSHH), are a transit peptide targeting the mitochondrion. The Mitochondrial matrix segment spans residues 57–63 (SGSKAAS). A helical transmembrane segment spans residues 64-85 (LHWTSERVVSVLLLGLIPAGYL). Over 86–90 (NPCSV) the chain is Mitochondrial intermembrane. The chain crosses the membrane as a helical span at residues 91–111 (VDYSLAAALTLHSHWGLGQVV). His-102 is a heme b binding site. At 112 to 120 (TDYVHGDTL) the chain is on the mitochondrial matrix side. Tyr-114 lines the a ubiquinone pocket. A helical transmembrane segment spans residues 121–142 (PKAARAGLLALSALTFAGLCYF). Residues 143 to 159 (NYHDVGICRAVAMLWKL) are Mitochondrial intermembrane-facing.

The protein belongs to the CybS family. As to quaternary structure, component of complex II composed of four subunits: the flavoprotein (FP) SDHA, iron-sulfur protein (IP) SDHB, and a cytochrome b560 composed of SDHC and SDHD.

The protein resides in the mitochondrion inner membrane. The protein operates within carbohydrate metabolism; tricarboxylic acid cycle. Its function is as follows. Membrane-anchoring subunit of succinate dehydrogenase (SDH) that is involved in complex II of the mitochondrial electron transport chain and is responsible for transferring electrons from succinate to ubiquinone (coenzyme Q). SDH also oxidizes malate to the non-canonical enol form of oxaloacetate, enol-oxaloacetate. Enol-oxaloacetate, which is a potent inhibitor of the succinate dehydrogenase activity, is further isomerized into keto-oxaloacetate. This Mus musculus (Mouse) protein is Succinate dehydrogenase [ubiquinone] cytochrome b small subunit, mitochondrial (Sdhd).